The primary structure comprises 517 residues: Probable protein phosphatase 2C 20 (517 aa).

Positions 1–59 (MWVMQGERRRARAPWGPPDTGGALLERWISRERRSDSRDASGSAKQRSAMGNSLPVESK) are disordered. Residues 28-39 (WISRERRSDSRD) show a composition bias toward basic and acidic residues. The 304-residue stretch at 70–373 (KYVVSSMQGW…DNTTVILVLF (304 aa)) folds into the PPM-type phosphatase domain. Residues Asp105, Gly106, Glu323, and Asp364 each contribute to the Mn(2+) site. Residues 380–517 (AVPPVDTDTD…PPHDDTYHRW (138 aa)) are disordered. Polar residues predominate over residues 402-414 (GSNNATASDNNDP). The segment covering 438 to 455 (DATATAVGSSSTTAVAAD) has biased composition (low complexity). Residues 499–517 (LPRSNPDKSPPHDDTYHRW) are compositionally biased toward basic and acidic residues.

This sequence belongs to the PP2C family. Mg(2+) is required as a cofactor. Mn(2+) serves as cofactor.

It catalyses the reaction O-phospho-L-seryl-[protein] + H2O = L-seryl-[protein] + phosphate. It carries out the reaction O-phospho-L-threonyl-[protein] + H2O = L-threonyl-[protein] + phosphate. This chain is Probable protein phosphatase 2C 20, found in Oryza sativa subsp. japonica (Rice).